Reading from the N-terminus, the 832-residue chain is WD repeat-containing protein 75 (832 aa).

WD repeat units follow at residues 4-43, 47-86, 90-134, 148-187, 196-233, 239-278, 281-320, 326-364, 378-425, 432-474, 485-523, 527-567, and 572-609; these read KTDI…KVYS, EEWL…KLWD, GILI…QLVA, KELS…YFFR, LKAT…RLWR, KEYT…VQWQ, DMSK…SIIE, SGLI…QFYS, QQEY…KLWA, SFVL…KAWC, YWSC…TLWS, WELL…CCWN, and ALEW…FVFK. Disordered stretches follow at residues 704 to 723 and 759 to 811; these read QHKL…HTQG and VREE…AQER. Residues 764–785 are compositionally biased toward acidic residues; the sequence is DSSEQEMDSEKEEEESEEEMEA. Positions 799 to 811 are enriched in basic and acidic residues; it reads DEQKPKLSKAQER.

In terms of assembly, component of the proposed t-UTP subcomplex of the ribosomal small subunit (SSU) processome. SSU processome is composed of more than 70 proteins and the RNA chaperone small nucleolar RNA (snoRNA) U3.

It localises to the nucleus. The protein localises to the nucleolus. Functionally, ribosome biogenesis factor. Part of the small subunit (SSU) processome, first precursor of the small eukaryotic ribosomal subunit. During the assembly of the SSU processome in the nucleolus, many ribosome biogenesis factors, an RNA chaperone and ribosomal proteins associate with the nascent pre-rRNA and work in concert to generate RNA folding, modifications, rearrangements and cleavage as well as targeted degradation of pre-ribosomal RNA by the RNA exosome. Involved in nucleolar processing of pre-18S ribosomal RNA. Required for optimal pre-ribosomal RNA transcription by RNA polymerase I. This Danio rerio (Zebrafish) protein is WD repeat-containing protein 75 (wdr75).